Reading from the N-terminus, the 319-residue chain is 3-oxoacyl-[acyl-carrier-protein] reductase, chloroplastic (319 aa).

The N-terminal 57 residues, 1–57 (MAAAVAAPRLISLKAVAKLGFREISQIRQLAPLHSAIPHFGMLRCRSRQPFSTSVVK), are a transit peptide targeting the chloroplast. Position 58 is an N-acetylalanine (A58). 81 to 105 (ITGASRGIGKAIALALGKAGCKVLV) is a binding site for NADP(+). S213 is a binding site for substrate. Y226 acts as the Proton acceptor in catalysis.

The protein belongs to the short-chain dehydrogenases/reductases (SDR) family. Homotetramer.

It is found in the plastid. Its subcellular location is the chloroplast. The enzyme catalyses a (3R)-hydroxyacyl-[ACP] + NADP(+) = a 3-oxoacyl-[ACP] + NADPH + H(+). It functions in the pathway lipid metabolism; fatty acid biosynthesis. The chain is 3-oxoacyl-[acyl-carrier-protein] reductase, chloroplastic from Arabidopsis thaliana (Mouse-ear cress).